Here is a 541-residue protein sequence, read N- to C-terminus: Chaperonin GroEL (541 aa).

Residues 29–32 (TLGP), 86–90 (DGTTT), Gly-413, 476–478 (NAA), and Asp-492 each bind ATP. A disordered region spans residues 521–541 (KPEENAPAAPAAPNPGMGGMM). The span at 525–535 (NAPAAPAAPNP) shows a compositional bias: low complexity.

It belongs to the chaperonin (HSP60) family. In terms of assembly, forms a cylinder of 14 subunits composed of two heptameric rings stacked back-to-back. Interacts with the co-chaperonin GroES.

The protein resides in the cytoplasm. It carries out the reaction ATP + H2O + a folded polypeptide = ADP + phosphate + an unfolded polypeptide.. Its function is as follows. Together with its co-chaperonin GroES, plays an essential role in assisting protein folding. The GroEL-GroES system forms a nano-cage that allows encapsulation of the non-native substrate proteins and provides a physical environment optimized to promote and accelerate protein folding. The sequence is that of Chaperonin GroEL from Lactiplantibacillus plantarum (strain ATCC BAA-793 / NCIMB 8826 / WCFS1) (Lactobacillus plantarum).